Consider the following 392-residue polypeptide: Nicotinate phosphoribosyltransferase (392 aa).

Position 214 is a phosphohistidine; by autocatalysis (His-214).

The protein belongs to the NAPRTase family. Post-translationally, transiently phosphorylated on a His residue during the reaction cycle. Phosphorylation strongly increases the affinity for substrates and increases the rate of nicotinate D-ribonucleotide production. Dephosphorylation regenerates the low-affinity form of the enzyme, leading to product release.

It catalyses the reaction nicotinate + 5-phospho-alpha-D-ribose 1-diphosphate + ATP + H2O = nicotinate beta-D-ribonucleotide + ADP + phosphate + diphosphate. It participates in cofactor biosynthesis; NAD(+) biosynthesis; nicotinate D-ribonucleotide from nicotinate: step 1/1. Functionally, catalyzes the synthesis of beta-nicotinate D-ribonucleotide from nicotinate and 5-phospho-D-ribose 1-phosphate at the expense of ATP. The chain is Nicotinate phosphoribosyltransferase from Xanthomonas axonopodis pv. citri (strain 306).